Here is a 146-residue protein sequence, read N- to C-terminus: UPF0260 protein Swit_2819 (146 aa).

This sequence belongs to the UPF0260 family.

This Rhizorhabdus wittichii (strain DSM 6014 / CCUG 31198 / JCM 15750 / NBRC 105917 / EY 4224 / RW1) (Sphingomonas wittichii) protein is UPF0260 protein Swit_2819.